Reading from the N-terminus, the 675-residue chain is Vitamin K-dependent protein S (675 aa).

A signal peptide spans Met-1 to Thr-24. The propeptide occupies Asn-25–Arg-41. The 46-residue stretch at Ala-42 to Gly-87 folds into the Gla domain. Glu-47, Glu-48, Glu-55, Glu-57, Glu-60, Glu-61, Glu-66, Glu-67, Glu-70, Glu-73, and Glu-77 each carry 4-carboxyglutamate. The cysteines at positions 58 and 63 are disulfide-linked. The thrombin-sensitive stretch occupies residues Cys-88–Ala-116. In terms of domain architecture, EGF-like 1 spans Ile-117–Gln-155. Intrachain disulfides connect Cys-121-Cys-134, Cys-126-Cys-143, Cys-145-Cys-154, Cys-161-Cys-175, Cys-171-Cys-184, Cys-186-Cys-199, Cys-205-Cys-217, Cys-212-Cys-226, Cys-228-Cys-241, Cys-247-Cys-256, Cys-252-Cys-265, Cys-267-Cys-282, and Cys-449-Cys-475. A (3R)-3-hydroxyaspartate modification is found at Asp-136. The region spanning Asp-157–Lys-200 is the EGF-like 2; calcium-binding domain. The 42-residue stretch at Asp-201 to Lys-242 folds into the EGF-like 3; calcium-binding domain. The EGF-like 4; calcium-binding domain maps to Asp-243 to Glu-283. Laminin G-like domains follow at residues Leu-299–Cys-475 and Tyr-484–Cys-665. N-linked (GlcNAc...) asparagine glycosylation is found at Asn-499 and Asn-509. Cys-638 and Cys-665 are disulfide-bonded.

In terms of processing, the iron and 2-oxoglutarate dependent 3-hydroxylation of aspartate and asparagine is (R) stereospecific within EGF domains. Plasma.

The protein resides in the secreted. Anticoagulant plasma protein; it is a cofactor to activated protein C in the degradation of coagulation factors Va and VIIIa. It helps to prevent coagulation and stimulating fibrinolysis. The protein is Vitamin K-dependent protein S (Pros1) of Mus musculus (Mouse).